Consider the following 87-residue polypeptide: Cobalt transport protein CbiN (87 aa).

Transmembrane regions (helical) follow at residues 4-24 (LLLL…EWAG) and 58-78 (MLFS…LGYY).

This sequence belongs to the CbiN family. In terms of assembly, forms an energy-coupling factor (ECF) transporter complex composed of an ATP-binding protein (A component, CbiO), a transmembrane protein (T component, CbiQ) and 2 possible substrate-capture proteins (S components, CbiM and CbiN) of unknown stoichimetry.

The protein localises to the cell membrane. It functions in the pathway cofactor biosynthesis; adenosylcobalamin biosynthesis. Its function is as follows. Part of the energy-coupling factor (ECF) transporter complex CbiMNOQ involved in cobalt import. The sequence is that of Cobalt transport protein CbiN from Archaeoglobus fulgidus (strain ATCC 49558 / DSM 4304 / JCM 9628 / NBRC 100126 / VC-16).